The primary structure comprises 320 residues: Cell-cell adhesion glycoprotein 64 (320 aa).

The signal sequence occupies residues 1–19 (MNKFITLFVLLASVSVAMS). Disulfide bonds link Cys-39–Cys-57, Cys-67–Cys-79, Cys-73–Cys-86, Cys-98–Cys-110, Cys-104–Cys-115, Cys-123–Cys-138, Cys-132–Cys-147, Cys-157–Cys-171, and Cys-165–Cys-176. N-linked (GlcNAc...) asparagine glycosylation occurs at Asn-49. Asn-80 is a glycosylation site (N-linked (GlcNAc...) asparagine). Residues Asn-141 and Asn-158 are each glycosylated (N-linked (GlcNAc...) asparagine). Asn-187 is a glycosylation site (N-linked (GlcNAc...) asparagine). Cystine bridges form between Cys-188–Cys-202 and Cys-194–Cys-207. Asn-216 carries an N-linked (GlcNAc...) asparagine glycan. 4 disulfide bridges follow: Cys-226/Cys-246, Cys-232/Cys-234, Cys-266/Cys-285, and Cys-270/Cys-281. Ser-298 carries the GPI-like-anchor amidated serine lipid modification. Positions 299–320 (SATTIAFNAFVVFAIVLSVLLF) are cleaved as a propeptide — removed in mature form.

Contains 18 disulfide bonds. In terms of processing, the GPI-like-anchor contains a phosphoceramide group, rather than a phosphatidyl group.

It localises to the cell membrane. Cell-cell adhesion during development. The protein is Cell-cell adhesion glycoprotein 64 of Heterostelium pallidum (Cellular slime mold).